A 39-amino-acid chain; its full sequence is Cytochrome b6-f complex subunit 5 (39 aa).

A helical membrane pass occupies residues 5–25 (LLCGIVLGLVPITLLGLFVAA).

It belongs to the PetG family. In terms of assembly, the 4 large subunits of the cytochrome b6-f complex are cytochrome b6, subunit IV (17 kDa polypeptide, PetD), cytochrome f and the Rieske protein, while the 4 small subunits are PetG, PetL, PetM and PetN. The complex functions as a dimer.

The protein resides in the cellular thylakoid membrane. Its function is as follows. Component of the cytochrome b6-f complex, which mediates electron transfer between photosystem II (PSII) and photosystem I (PSI), cyclic electron flow around PSI, and state transitions. PetG is required for either the stability or assembly of the cytochrome b6-f complex. The chain is Cytochrome b6-f complex subunit 5 from Prochlorococcus marinus (strain SARG / CCMP1375 / SS120).